The following is a 128-amino-acid chain: uncharacterized protein (128 aa).

Belongs to the HesB/IscA family.

This is an uncharacterized protein from Buchnera aphidicola subsp. Baizongia pistaciae (strain Bp).